The sequence spans 80 residues: Exodeoxyribonuclease 7 small subunit (80 aa).

This sequence belongs to the XseB family. Heterooligomer composed of large and small subunits.

It is found in the cytoplasm. The catalysed reaction is Exonucleolytic cleavage in either 5'- to 3'- or 3'- to 5'-direction to yield nucleoside 5'-phosphates.. Its function is as follows. Bidirectionally degrades single-stranded DNA into large acid-insoluble oligonucleotides, which are then degraded further into small acid-soluble oligonucleotides. This Pseudoalteromonas translucida (strain TAC 125) protein is Exodeoxyribonuclease 7 small subunit.